A 181-amino-acid polypeptide reads, in one-letter code: HGPRTase-like protein 1 (181 aa).

Belongs to the purine/pyrimidine phosphoribosyltransferase family. Archaeal HPRT subfamily.

May catalyze a purine salvage reaction, the substrate is unknown. The protein is HGPRTase-like protein 1 of Halalkalicoccus jeotgali (strain DSM 18796 / CECT 7217 / JCM 14584 / KCTC 4019 / B3).